Reading from the N-terminus, the 706-residue chain is Semenogelin-2 (706 aa).

Positions 1–23 are cleaved as a signal peptide; sequence MKSIILFVLSLLLILEKQAAVMG. 3 disordered regions span residues 25 to 62, 131 to 156, and 276 to 678; these read KGGS…SKGS, KGGQ…KGIF, and NLNQ…SGAH. The span at 50–59 shows a compositional bias: basic and acidic residues; sequence GQKDKQHTES. Over residues 137–151 the composition is skewed to polar residues; the sequence is HGTQNPSQDQGNSPS. Residues 297 to 308 are compositionally biased toward basic and acidic residues; the sequence is TEERQPNHEENS. Positions 329 to 339 are enriched in polar residues; it reads KSQNQVTIPSQ. Over residues 340–349 the composition is skewed to basic and acidic residues; sequence DQEHGHKENK. A compositionally biased stretch (polar residues) spans 389-399; that stretch reads KSQNQVTIPSQ. Positions 400 to 409 are enriched in basic and acidic residues; the sequence is DQEHGHKENK. Polar residues predominate over residues 449-459; sequence KSQNQVTIPSQ. Basic and acidic residues predominate over residues 460 to 469; the sequence is DQEHGHKENK. The span at 509–519 shows a compositional bias: polar residues; the sequence is KSQNQVAIPSQ. Residues 520–529 are compositionally biased toward basic and acidic residues; that stretch reads DQEHGHKENK. Residues 569–579 are compositionally biased toward polar residues; the sequence is KSQNQVTIPSQ. Positions 580-589 are enriched in basic and acidic residues; sequence DQEHGHKENK. Polar residues-rich tracts occupy residues 611–622 and 630–653; these read KDVSQSSLSFQT and SQIQ…NSGK. A compositionally biased stretch (basic and acidic residues) spans 654-670; it reads SADREQDLLSHEQEGRY.

It belongs to the semenogelin family. As to quaternary structure, interacts with SERPINA5.

Its subcellular location is the secreted. Functionally, participates in the formation of a gel matrix (sperm coagulum) entrapping the accessory gland secretions and ejaculated spermatozoa. The sequence is that of Semenogelin-2 (SEMG2) from Macaca mulatta (Rhesus macaque).